We begin with the raw amino-acid sequence, 391 residues long: Apolipoprotein A-IV (391 aa).

The first 20 residues, 1–20, serve as a signal peptide directing secretion; the sequence is MFLKAVVLTVALVAITGTQA. 13 tandem repeats follow at residues 33–54, 60–81, 82–103, 115–136, 137–158, 159–180, 181–202, 203–224, 225–246, 247–268, 269–286, 287–308, and 309–330. The tract at residues 33 to 330 is 13 X 22 AA approximate tandem repeats; sequence DYFTQLSNNA…QMEKFRQQLG (298 aa). Ser-333 is subject to Phosphoserine. Residues 354-391 are disordered; the sequence is FMSTLQKKGSPDQPLALPLPEQVQEQVQEQVQPKPLES. A compositionally biased stretch (low complexity) spans 371–391; sequence PLPEQVQEQVQEQVQPKPLES.

The protein belongs to the apolipoprotein A1/A4/E family. In terms of assembly, homodimer. In terms of tissue distribution, secreted in plasma.

Its subcellular location is the secreted. Its function is as follows. May have a role in chylomicrons and VLDL secretion and catabolism. Required for efficient activation of lipoprotein lipase by ApoC-II; potent activator of LCAT. Apoa-IV is a major component of HDL and chylomicrons. This Rattus norvegicus (Rat) protein is Apolipoprotein A-IV (Apoa4).